The following is a 612-amino-acid chain: Peroxisomal carnitine O-octanoyltransferase (612 aa).

An N-acetylmethionine modification is found at methionine 1. N6-succinyllysine occurs at positions 40 and 57. Histidine 327 serves as the catalytic Proton acceptor. Residues lysine 406 and 410-417 (KKEALHPD) contribute to the CoA site. At lysine 406 the chain carries N6-acetyllysine; alternate. The residue at position 406 (lysine 406) is an N6-succinyllysine; alternate. (R)-carnitine is bound by residues tyrosine 439, threonine 441, and threonine 452. A Microbody targeting signal motif is present at residues 610–612 (AHL).

Belongs to the carnitine/choline acetyltransferase family. As to expression, liver.

The protein localises to the peroxisome. It carries out the reaction octanoyl-CoA + (R)-carnitine = O-octanoyl-(R)-carnitine + CoA. The enzyme catalyses 4,8-dimethylnonanoyl-CoA + (R)-carnitine = O-4,8-dimethylnonanoyl-(R)-carnitine + CoA. It participates in lipid metabolism; fatty acid beta-oxidation. Functionally, beta-oxidation of fatty acids. The highest activity concerns the C6 to C10 chain length substrate. The polypeptide is Peroxisomal carnitine O-octanoyltransferase (Crot) (Rattus norvegicus (Rat)).